The primary structure comprises 293 residues: Hydroxyquinol 1,2-dioxygenase (293 aa).

Positions 164, 197, 221, and 223 each coordinate Fe cation.

Belongs to the intradiol ring-cleavage dioxygenase family. As to quaternary structure, homodimer. Fe(3+) is required as a cofactor.

It catalyses the reaction benzene-1,2,4-triol + O2 = maleylacetate + 2 H(+). It functions in the pathway aromatic compound metabolism; beta-ketoadipate pathway; 3-oxoadipate from 3,4-dihydroxybenzoate: step 2/4. Its activity is regulated as follows. Inhibited by 3,5-dichlorocatechol, chlorohydroquinone and 4,5-dibromocatechol. Functionally, catalyzes the ortho-cleavage of the aromatic ring of hydroxyquinol. In Nocardioides simplex (Arthrobacter simplex), this protein is Hydroxyquinol 1,2-dioxygenase (chqB).